The chain runs to 96 residues: Aspartyl/glutamyl-tRNA(Asn/Gln) amidotransferase subunit C (96 aa).

This sequence belongs to the GatC family. As to quaternary structure, heterotrimer of A, B and C subunits.

It carries out the reaction L-glutamyl-tRNA(Gln) + L-glutamine + ATP + H2O = L-glutaminyl-tRNA(Gln) + L-glutamate + ADP + phosphate + H(+). The enzyme catalyses L-aspartyl-tRNA(Asn) + L-glutamine + ATP + H2O = L-asparaginyl-tRNA(Asn) + L-glutamate + ADP + phosphate + 2 H(+). Functionally, allows the formation of correctly charged Asn-tRNA(Asn) or Gln-tRNA(Gln) through the transamidation of misacylated Asp-tRNA(Asn) or Glu-tRNA(Gln) in organisms which lack either or both of asparaginyl-tRNA or glutaminyl-tRNA synthetases. The reaction takes place in the presence of glutamine and ATP through an activated phospho-Asp-tRNA(Asn) or phospho-Glu-tRNA(Gln). This is Aspartyl/glutamyl-tRNA(Asn/Gln) amidotransferase subunit C from Wolinella succinogenes (strain ATCC 29543 / DSM 1740 / CCUG 13145 / JCM 31913 / LMG 7466 / NCTC 11488 / FDC 602W) (Vibrio succinogenes).